Reading from the N-terminus, the 292-residue chain is ATP synthase subunit a (292 aa).

The next 7 membrane-spanning stretches (helical) occupy residues 39–59 (QILGIFIVFVLLLTFFIFYKL), 73–93 (FLLLFQMLFVWVQDTTADLLG), 102–122 (YFLMLLLYIVSSNLVSLLGGI), 128–148 (SLTFTFSLGLATFIGIVVMGI), 172–192 (TFIPNPFSILSGFAPLFSISL), 196–216 (GNILAGTVILALFYNFWIFIF), and 231–251 (VFAGLITPVLHIYFDVIAGVL).

Belongs to the ATPase A chain family. In terms of assembly, F-type ATPases have 2 components, CF(1) - the catalytic core - and CF(0) - the membrane proton channel. CF(1) has five subunits: alpha(3), beta(3), gamma(1), delta(1), epsilon(1). CF(0) has three main subunits: a(1), b(2) and c(9-12). The alpha and beta chains form an alternating ring which encloses part of the gamma chain. CF(1) is attached to CF(0) by a central stalk formed by the gamma and epsilon chains, while a peripheral stalk is formed by the delta and b chains.

It localises to the cell membrane. In terms of biological role, key component of the proton channel; it plays a direct role in the translocation of protons across the membrane. In Mycoplasma genitalium (strain ATCC 33530 / DSM 19775 / NCTC 10195 / G37) (Mycoplasmoides genitalium), this protein is ATP synthase subunit a.